The following is an 842-amino-acid chain: Leucine--tRNA ligase (842 aa).

Residues 62 to 72 (PYPSGDLHMGH) carry the 'HIGH' region motif. Residues 390–414 (GDEDPAETGVATAGEGTLKNSGELD) form a disordered region. The 'KMSKS' region motif lies at 607–611 (AMSKS). ATP is bound at residue Lys610.

This sequence belongs to the class-I aminoacyl-tRNA synthetase family.

It localises to the cytoplasm. It carries out the reaction tRNA(Leu) + L-leucine + ATP = L-leucyl-tRNA(Leu) + AMP + diphosphate. The polypeptide is Leucine--tRNA ligase (Paenarthrobacter aurescens (strain TC1)).